Here is a 546-residue protein sequence, read N- to C-terminus: Chaperonin GroEL (546 aa).

ATP contacts are provided by residues 30–33, Lys-51, 87–91, Gly-415, and Asp-495; these read TLGP and DGTTT.

The protein belongs to the chaperonin (HSP60) family. In terms of assembly, forms a cylinder of 14 subunits composed of two heptameric rings stacked back-to-back. Interacts with the co-chaperonin GroES.

Its subcellular location is the cytoplasm. It catalyses the reaction ATP + H2O + a folded polypeptide = ADP + phosphate + an unfolded polypeptide.. Functionally, together with its co-chaperonin GroES, plays an essential role in assisting protein folding. The GroEL-GroES system forms a nano-cage that allows encapsulation of the non-native substrate proteins and provides a physical environment optimized to promote and accelerate protein folding. This chain is Chaperonin GroEL, found in Brucella melitensis biotype 1 (strain ATCC 23456 / CCUG 17765 / NCTC 10094 / 16M).